Reading from the N-terminus, the 708-residue chain is F-box only protein 43 (708 aa).

The tract at residues 35–55 is disordered; the sequence is MSQRHSGQAGTEAGNGADSPP. Phosphoserine is present on serine 76. Threonine 234 is subject to Phosphothreonine. The tract at residues 320-426 is disordered; the sequence is PSPEVRGSIS…ISEGQLSSDE (107 aa). Over residues 327–337 the composition is skewed to polar residues; the sequence is SISTPEDSGFN. At serine 334 the chain carries Phosphoserine. A compositionally biased stretch (basic residues) spans 374–385; sequence KTRHLGRSRRLS. The segment covering 399 to 411 has biased composition (basic and acidic residues); that stretch reads EKQIVHPDSEKRA. An F-box domain is found at 490–547; the sequence is MGIEKLDILTELKYRNLKHILAMVLESLTAESLCSVWKVSRNWREIVVQDKNANRRRK. The ZBR-type zinc-finger motif lies at 636–684; that stretch reads ALKPCPRCQSPAKYQPYKKRGLCSRTACGFDFCVLCLCAYHGSEECSRG. 8 residues coordinate Zn(2+): cysteine 640, cysteine 643, cysteine 658, cysteine 663, cysteine 668, cysteine 671, histidine 676, and cysteine 681. The interval 682 to 708 is disordered; that stretch reads SRGAAKPRNRKDALPGSAQSKRNLKRL.

Part of a SCF (SKP1-cullin-F-box) protein ligase complex. According to PubMed:34595750 interaction with SKP1 does not occur. Interacts with ANAPC2; the interaction is direct, ANAPC4, CDC16, CDC23; the interaction is direct, ANAPC10; the interaction is direct and CDC26, during spermatogenesis. May interact with CDC20. Post-translationally, phosphorylated on Ser-76, Thr-234 and Ser-334 in response to calcium, which is a prerequisite for ubiquitination and proteasomal degradation. Ubiquitinated in response to calcium, which promotes proteasomal degradation. In terms of tissue distribution, expressed in the testis.

It participates in protein modification; protein ubiquitination. Required to establish and maintain the arrest of oocytes at the second meiotic metaphase until fertilization. Acts by inhibiting the anaphase-promoting complex/cyclosome (APC/C) ubiquitin ligase. Probably recognizes and binds to some phosphorylated proteins and promotes their ubiquitination and degradation. Plays a vital role in modulating the ubiquitilation of CCNB1 and CDK1 during gametogenesis. The protein is F-box only protein 43 (FBXO43) of Homo sapiens (Human).